We begin with the raw amino-acid sequence, 295 residues long: Aquaporin-9 (295 aa).

Residues 1–24 lie on the Cytoplasmic side of the membrane; the sequence is MPSEKDRAKKNLVQRLALKSCLAK. Residues 25–43 traverse the membrane as a helical segment; that stretch reads ETLSEFLGTFIMIVLGCGS. Residues 44–57 are Extracellular-facing; the sequence is IAQAVLSREKAGGI. The helical transmembrane segment at 58-77 threads the bilayer; the sequence is ITINIGFATAVVMALYATFG. Residues 78–79 are Cytoplasmic-facing; the sequence is VS. The discontinuously helical intramembrane region spans 80–92; the sequence is GGHINPAVSFAMC. The short motif at 84 to 86 is the NPA 1 element; that stretch reads NPA. Over 93 to 98 the chain is Cytoplasmic; the sequence is TFGRME. A helical membrane pass occupies residues 99-123; the sequence is WFKFPFYVGAQLLGAFVGAATVFGI. Residues 124 to 160 lie on the Extracellular side of the membrane; it reads YYDGLMAFADGKLLITGENGTAFIFATYPKPFVSVPG. Residues 161–178 form a helical membrane-spanning segment; the sequence is AFVDQVVSTMFLLLIVFA. Residues 179-190 are Cytoplasmic-facing; it reads IFDSRNLGVPRG. Residues 191-207 form a helical membrane-spanning segment; the sequence is LEPIVIGLLIIVISCSL. Topologically, residues 208 to 210 are extracellular; sequence GLN. Positions 211-225 form an intramembrane region, discontinuously helical; the sequence is SGCAMNPARDLSPRL. The short motif at 216–218 is the NPA 2 element; sequence NPA. At 226 to 243 the chain is on the extracellular side; sequence FTALAGWGFEVFTFGNNF. A helical transmembrane segment spans residues 244-264; sequence WWIPVVGPMIGAVLGGLIYVL. The Cytoplasmic segment spans residues 265-295; that stretch reads FIQMHHSNPDPEVKAEPAENNLEKHELSVIM.

This sequence belongs to the MIP/aquaporin (TC 1.A.8) family. In terms of assembly, homotetramer; each monomer provides an independent glycerol/water pore.

The protein localises to the cell membrane. It is found in the basolateral cell membrane. It catalyses the reaction glycerol(in) = glycerol(out). It carries out the reaction H2O(in) = H2O(out). The enzyme catalyses urea(in) = urea(out). The catalysed reaction is (S)-lactate(in) = (S)-lactate(out). It catalyses the reaction NH4(+)(in) = NH4(+)(out). It carries out the reaction uracil(in) = uracil(out). The enzyme catalyses adenine(out) = adenine(in). The catalysed reaction is 3-hydroxybutanoate(in) = 3-hydroxybutanoate(out). It catalyses the reaction D-sorbitol(in) = D-sorbitol(out). It carries out the reaction D-mannitol(in) = D-mannitol(out). The enzyme catalyses H2O2(out) = H2O2(in). The catalysed reaction is arsenite(in) = arsenite(out). It catalyses the reaction selenite(in) = selenite(out). Its function is as follows. Aquaglyceroporins form homotetrameric transmembrane channels, with each monomer independently mediating glycerol and water transport across the plasma membrane along their osmotic gradient. AQP9 is the primary route for glycerol uptake in hepatocytes, supporting hepatic gluconeogenesis. It exhibits broad specificity and may transport various small, non-charged solutes, including carbamides, polyols, purines, and pyrimidines. AQP9 may also facilitate hepatic urea extrusion. Due to its permeability to lactate, AQP9 might participate in the astrocyte-to-neuron lactate shuttle, supplying neurons with energy. Additionally, AQP9 is permeable to arsenite, contributing to arsenic excretion by the liver and providing partial protection against arsenic toxicity. It is also permeable to H2O2 in vivo. Could also be permeable to ammonium. The polypeptide is Aquaporin-9 (Mus musculus (Mouse)).